Here is a 278-residue protein sequence, read N- to C-terminus: Translation initiation factor IF-3, mitochondrial (278 aa).

Residues 1–31 (MAALFLKRLTLQTVKSENSCIRCFGKHILQK) constitute a mitochondrion transit peptide. Residues 249–278 (KAYKETQETQERDTLNKDHGNDKESNVLHQ) are disordered.

It belongs to the IF-3 family.

Its subcellular location is the mitochondrion. Its function is as follows. IF-3 binds to the 28S ribosomal subunit and shifts the equilibrium between 55S ribosomes and their 39S and 28S subunits in favor of the free subunits, thus enhancing the availability of 28S subunits on which protein synthesis initiation begins. The polypeptide is Translation initiation factor IF-3, mitochondrial (MTIF3) (Homo sapiens (Human)).